The following is a 571-amino-acid chain: Zinc finger protein 181 (571 aa).

Residues 4–76 (VTFNDVAIDF…EKKLSKGMIP (73 aa)) form the KRAB domain. Residues Lys-109 and Lys-126 each participate in a glycyl lysine isopeptide (Lys-Gly) (interchain with G-Cter in SUMO2) cross-link. C2H2-type zinc fingers lie at residues 237-259 (YTCSECGKAFGKQSILNRHWRIH), 265-287 (YECRECGKTFSHGSSLTRHLISH), 293-315 (YKCIECGKAFSHVSSLTNHQSTH), 321-343 (YECMNCGKSFSRVSHLIEHLRIH), 349-371 (YECRICGKAFIHRSSLIHHQKIH), 377-399 (YECRECGKAFCCSSHLTRHQRIH), 405-427 (YECNKCLKVFSSLSFLVQHQSIH), 433-455 (FECQKCRKSFNQLESLNMHLRNH), 461-483 (YECSICGKAFSHRSSLLQHHRIH), 489-511 (YECIKCGKTFSCSSNLTVHQRIH), and 517-539 (YKCNECGKAFSKGSNLTAHQRVH).

The protein belongs to the krueppel C2H2-type zinc-finger protein family.

It is found in the nucleus. In terms of biological role, may be involved in transcriptional regulation. The sequence is that of Zinc finger protein 181 (ZNF181) from Homo sapiens (Human).